The sequence spans 235 residues: NAD(P)H-hydrate epimerase (235 aa).

The YjeF N-terminal domain occupies 12–218 (AIVMDQLLMG…EFLKETNLTI (207 aa)). 62-66 (NNGGD) provides a ligand contact to (6S)-NADPHX. The K(+) site is built by asparagine 63 and aspartate 127. Residues 131–137 (GYSFKGD) and aspartate 161 contribute to the (6S)-NADPHX site. Serine 164 contributes to the K(+) binding site.

The protein belongs to the NnrE/AIBP family. It depends on K(+) as a cofactor.

The catalysed reaction is (6R)-NADHX = (6S)-NADHX. It catalyses the reaction (6R)-NADPHX = (6S)-NADPHX. Functionally, catalyzes the epimerization of the S- and R-forms of NAD(P)HX, a damaged form of NAD(P)H that is a result of enzymatic or heat-dependent hydration. This is a prerequisite for the S-specific NAD(P)H-hydrate dehydratase to allow the repair of both epimers of NAD(P)HX. In Dictyostelium discoideum (Social amoeba), this protein is NAD(P)H-hydrate epimerase.